Consider the following 261-residue polypeptide: Thiazole synthase (261 aa).

Lys102 (schiff-base intermediate with DXP) is an active-site residue. 1-deoxy-D-xylulose 5-phosphate-binding positions include Gly163, Ala189 to Gly190, and Asn211 to Thr212.

Belongs to the ThiG family. Homotetramer. Forms heterodimers with either ThiH or ThiS.

The protein resides in the cytoplasm. The catalysed reaction is [ThiS sulfur-carrier protein]-C-terminal-Gly-aminoethanethioate + 2-iminoacetate + 1-deoxy-D-xylulose 5-phosphate = [ThiS sulfur-carrier protein]-C-terminal Gly-Gly + 2-[(2R,5Z)-2-carboxy-4-methylthiazol-5(2H)-ylidene]ethyl phosphate + 2 H2O + H(+). It functions in the pathway cofactor biosynthesis; thiamine diphosphate biosynthesis. Catalyzes the rearrangement of 1-deoxy-D-xylulose 5-phosphate (DXP) to produce the thiazole phosphate moiety of thiamine. Sulfur is provided by the thiocarboxylate moiety of the carrier protein ThiS. In vitro, sulfur can be provided by H(2)S. The protein is Thiazole synthase of Acinetobacter baumannii (strain SDF).